The chain runs to 508 residues: Pyruvate kinase (508 aa).

Residue R56 coordinates substrate. Positions 58, 60, 90, and 91 each coordinate K(+). Residue 58–61 coordinates ATP; the sequence is NFSH. ATP contacts are provided by R97 and K185. Position 251 (E251) interacts with Mg(2+). Substrate contacts are provided by G274, D275, and T307. Mg(2+) is bound at residue D275.

The protein belongs to the pyruvate kinase family. In terms of assembly, homotetramer. It depends on Mg(2+) as a cofactor. Requires K(+) as cofactor.

The enzyme catalyses pyruvate + ATP = phosphoenolpyruvate + ADP + H(+). Its pathway is carbohydrate degradation; glycolysis; pyruvate from D-glyceraldehyde 3-phosphate: step 5/5. Its activity is regulated as follows. Regulated by phosphoenolpyruvate substrate and is allosterically activated by ribose-5-phosphate, AMP and other nucleoside monophosphates but not by fructose-1,6-bisphosphate. This Mycoplasma genitalium (strain ATCC 33530 / DSM 19775 / NCTC 10195 / G37) (Mycoplasmoides genitalium) protein is Pyruvate kinase (pyk).